The chain runs to 88 residues: Probable Fe(2+)-trafficking protein (88 aa).

This sequence belongs to the Fe(2+)-trafficking protein family.

Its function is as follows. Could be a mediator in iron transactions between iron acquisition and iron-requiring processes, such as synthesis and/or repair of Fe-S clusters in biosynthetic enzymes. The chain is Probable Fe(2+)-trafficking protein from Neisseria gonorrhoeae (strain ATCC 700825 / FA 1090).